The primary structure comprises 530 residues: Histone-arginine methyltransferase CARMER (530 aa).

The 310-residue stretch at 141-450 folds into the SAM-dependent MTase PRMT-type domain; the sequence is ASQYFQFYGY…QSYDVTIDLH (310 aa). S-adenosyl-L-methionine is bound by residues glutamine 154, arginine 163, glycine 187, glutamate 209, glutamate 238, and threonine 266. Arginine 501 is subject to Asymmetric dimethylarginine; by autocatalysis.

Belongs to the class I-like SAM-binding methyltransferase superfamily. Protein arginine N-methyltransferase family. In terms of assembly, homodimer. Post-translationally, the dimethylated protein is the major form.

The protein localises to the cytoplasm. The protein resides in the nucleus. It carries out the reaction L-arginyl-[protein] + 2 S-adenosyl-L-methionine = N(omega),N(omega)-dimethyl-L-arginyl-[protein] + 2 S-adenosyl-L-homocysteine + 2 H(+). Its function is as follows. Methylates (mono- and asymmetric dimethylation) the guanidino nitrogens of arginyl residues in proteins. May methylate histone H3 at 'Arg-17' and activate transcription via chromatin remodeling. The sequence is that of Histone-arginine methyltransferase CARMER (Art4) from Drosophila sechellia (Fruit fly).